A 113-amino-acid polypeptide reads, in one-letter code: Protein crumbs homolog 3 (113 aa).

A signal peptide spans 1–24 (MATPGLGVLLAFGLPMLPSGWSLT). The tract at residues 23-44 (LTAPDPFTNSTTQPPGDESNGG) is disordered. Residues 25 to 49 (APDPFTNSTTQPPGDESNGGLSSGA) lie on the Extracellular side of the membrane. N-linked (GlcNAc...) asparagine glycosylation is present at Asn-31. A helical transmembrane segment spans residues 50–70 (IVAITVVFSILGVLLIAVGLF). The Cytoplasmic portion of the chain corresponds to 71–113 (LLMRKLREKRQTEGTYRPSSEEQVGARAPPPPNLKLPPEERLI). Positions 77–113 (REKRQTEGTYRPSSEEQVGARAPPPPNLKLPPEERLI) are interaction with EPB41L5. A disordered region spans residues 80-113 (RQTEGTYRPSSEEQVGARAPPPPNLKLPPEERLI). Residues 83–92 (EGTYRPSSEE) are compositionally biased toward polar residues. The PDZ-binding motif lies at 110–113 (ERLI).

Component of a complex composed of CRB3, PALS1 and PATJ. Interacts (via C-terminus) with PALS1 (via PDZ domain). Interacts with PARD6A. Interacts (via intracellular domain) with EPB41L5. Interacts with WDR83. In terms of tissue distribution, expressed in the apical renal tubules (at protein level). Expressed in the retinal pigment epithelium.

It is found in the apical cell membrane. Its subcellular location is the cell junction. The protein resides in the tight junction. Functionally, involved in the establishment of cell polarity in mammalian epithelial cells. Regulates the morphogenesis of tight junctions. Involved in promoting phosphorylation and cytoplasmic retention of transcriptional coactivators YAP1 and WWTR1/TAZ which leads to suppression of TGFB1-dependent transcription of target genes such as CCN2/CTGF, SERPINE1/PAI1, SNAI1/SNAIL1 and SMAD7. The sequence is that of Protein crumbs homolog 3 (Crb3) from Mus musculus (Mouse).